We begin with the raw amino-acid sequence, 449 residues long: GTPase Der (449 aa).

EngA-type G domains are found at residues P4–E169 and I177–R353. GTP contacts are provided by residues G10–S17, D57–L61, N120–E123, G183–S190, D230–I234, and N295–D298. In terms of domain architecture, KH-like spans R354–K439.

Belongs to the TRAFAC class TrmE-Era-EngA-EngB-Septin-like GTPase superfamily. EngA (Der) GTPase family. In terms of assembly, associates with the 50S ribosomal subunit.

GTPase that plays an essential role in the late steps of ribosome biogenesis. This is GTPase Der from Thermosynechococcus vestitus (strain NIES-2133 / IAM M-273 / BP-1).